The sequence spans 186 residues: Ribosome-recycling factor (186 aa).

The protein belongs to the RRF family.

Its subcellular location is the cytoplasm. Functionally, responsible for the release of ribosomes from messenger RNA at the termination of protein biosynthesis. May increase the efficiency of translation by recycling ribosomes from one round of translation to another. This Chlorobium chlorochromatii (strain CaD3) protein is Ribosome-recycling factor.